The primary structure comprises 531 residues: Transcription factor LG2 (531 aa).

Disordered stretches follow at residues 115–154 (RHQQQLHSGNSQSVGSTGTDSSSAQNTMSQMELVSPASSA) and 195–220 (LHGGEGGGDHDKRKHGSTRKDGKLVD). Positions 116–154 (HQQQLHSGNSQSVGSTGTDSSSAQNTMSQMELVSPASSA) are enriched in polar residues. A bZIP domain is found at 220-264 (DAKTERRLAQNREAARKSRLRKKAYVQQLETSRIRLQQVEHELQR). Residues 222-242 (KTERRLAQNREAARKSRLRKK) form a basic motif region. A Nuclear localization signal motif is present at residues 224–231 (ERRLAQNR). Residues 248 to 262 (LETSRIRLQQVEHEL) are leucine-zipper. Residues 285–499 (AAMFDMEYAR…RALSNLWASR (215 aa)) form the DOG1 domain.

The protein belongs to the bZIP family. In terms of assembly, binds DNA as a dimer. Expression in meristem/developing ligule regions.

The protein localises to the nucleus. Functionally, required for the formation of the blade-sheath boundary in leaves. Promotes flowering. The sequence is that of Transcription factor LG2 from Zea mays (Maize).